An 843-amino-acid polypeptide reads, in one-letter code: MSSAMLVTCLPDPSSSFREDAPRPPVPGEEGETPPCQPGVGKGQVTKPMPVSSNTRRNEDGLGEPEGRASPDSPLTRWTKSLHSLLGDQDGAYLFRTFLEREKCVDTLDFWFACNGFRQMNLKDTKTLRVAKAIYKRYIENNSIVSKQLKPATKTYIRDGIKKQQIDSIMFDQAQTEIQSVMEENAYQMFLTSDIYLEYVRSGGENTAYMSNGGLGSLKVVCGYLPTLNEEEEWTCADFKCKLSPTVVGLSSKTLRATASVRSTETVDSGYRSFKRSDPVNPYHIGSGYVFAPATSANDSEISSDALTDDSMSMTDSSVDGIPPYRVGSKKQLQREMHRSVKANGQVSLPHFPRTHRLPKEMTPVEPATFAAELISRLEKLKLELESRHSLEERLQQIREDEEREGSELTLNSREGAPTQHPLSLLPSGSYEEDPQTILDDHLSRVLKTPGCQSPGVGRYSPRSRSPDHHHHHHSQYHSLLPPGGKLPPAAASPGACPLLGGKGFVTKQTTKHVHHHYIHHHAVPKTKEEIEAEATQRVHCFCPGGSEYYCYSKCKSHSKAPETMPSEQFGGSRGSTLPKRNGKGTEPGLALPAREGGAPGGAGALQLPREEGDRSQDVWQWMLESERQSKPKPHSAQSTKKAYPLESARSSPGERASRHHLWGGNSGHPRTTPRAHLFTQDPAMPPLTPPNTLAQLEEACRRLAEVSKPPKQRCCVASQQRDRNHSATVQTGATPFSNPSLAPEDHKEPKKLAGVHALQASELVVTYFFCGEEIPYRRMLKAQSLTLGHFKEQLSKKGNYRYYFKKASDEFACGAVFEEIWEDETVLPMYEGRILGKVERID.

Residues 1–75 are disordered; that stretch reads MSSAMLVTCL…EGRASPDSPL (75 aa). The Tankyrase-binding motif motif lies at 21-30; it reads APRPPVPGEE. The span at 56–69 shows a compositional bias: basic and acidic residues; the sequence is RRNEDGLGEPEGRA. The 120-residue stretch at 81–200 folds into the RGS domain; the sequence is SLHSLLGDQD…LTSDIYLEYV (120 aa). The interval 327–413 is interaction with GSK3B; sequence VGSKKQLQRE…REGSELTLNS (87 aa). The interaction with SIAH1 and SIAH2 stretch occupies residues 334–393; the sequence is QREMHRSVKANGQVSLPHFPRTHRLPKEMTPVEPATFAAELISRLEKLKLELESRHSLEE. Disordered stretches follow at residues 396–435, 447–494, 561–674, and 718–748; these read QQIR…EEDP, LKTP…AASP, APET…RTTP, and ASQQ…EDHK. The tract at residues 413 to 476 is interaction with beta-catenin; sequence SREGAPTQHP…PDHHHHHHSQ (64 aa). Low complexity-rich tracts occupy residues 477–494 and 588–597; these read YHSL…AASP and PGLALPAREG. Residues 727–741 are compositionally biased toward polar residues; it reads SATVQTGATPFSNPS. In terms of domain architecture, DIX spans 761-843; it reads ASELVVTYFF…RILGKVERID (83 aa).

Interacts with glycogen synthase kinase-3 beta (GSK3B) and beta-catenin. The interaction between axin and beta-catenin occurs via the armadillo repeats contained in beta-catenin. Interacts with SMAD7 and RNF111. Interacts with ANKRD6. Interacts with SIAH1. Interacts with SIAH2. Probably phosphorylated by GSK3B and dephosphorylated by PP2A. In terms of processing, ADP-ribosylated by tankyrase TNKS and TNKS2. Poly-ADP-ribosylated protein is recognized by RNF146, followed by ubiquitination and subsequent activation of the Wnt signaling pathway. Post-translationally, ubiquitinated by RNF146 when poly-ADP-ribosylated, leading to its degradation and subsequent activation of the Wnt signaling pathway. Deubiquitinated by USP34, deubiquitinated downstream of beta-catenin stabilization step: deubiquitination is important Wnt signaling to positively regulate beta-catenin (CTNBB1)-mediated transcription. In terms of tissue distribution, expressed in brain and lymphoblast.

It localises to the cytoplasm. In terms of biological role, inhibitor of the Wnt signaling pathway. Down-regulates beta-catenin. Probably facilitate the phosphorylation of beta-catenin and APC by GSK3B. The polypeptide is Axin-2 (AXIN2) (Homo sapiens (Human)).